An 836-amino-acid chain; its full sequence is Outer membrane usher protein PapC (836 aa).

An N-terminal signal peptide occupies residues 1–24; sequence MKDRIPFAVNNITCVILLSLFCNA. A disulfide bridge connects residues Cys814 and Cys832.

Belongs to the fimbrial export usher family.

It is found in the cell outer membrane. Involved in the export and assembly of pili subunits across the outer membrane. Forms a hexameric ring-shaped pore in the outer bacterial membrane. The 2 nanometer-diameter pore allows the passage of the thin tip fibrillum. As for the rod, it probably unwinds into linear fibers which would therefore be narrow enough to pass through the pore. The sequence is that of Outer membrane usher protein PapC (papC) from Escherichia coli.